The primary structure comprises 155 residues: 1,4-dihydroxy-2-naphthoyl-CoA hydrolase (155 aa).

Residue Asp27 is part of the active site.

This sequence belongs to the 4-hydroxybenzoyl-CoA thioesterase family. DHNA-CoA hydrolase subfamily.

The catalysed reaction is 1,4-dihydroxy-2-naphthoyl-CoA + H2O = 1,4-dihydroxy-2-naphthoate + CoA + H(+). It participates in cofactor biosynthesis; phylloquinone biosynthesis. The protein operates within quinol/quinone metabolism; 1,4-dihydroxy-2-naphthoate biosynthesis; 1,4-dihydroxy-2-naphthoate from chorismate: step 7/7. Functionally, catalyzes the hydrolysis of 1,4-dihydroxy-2-naphthoyl-CoA (DHNA-CoA) to 1,4-dihydroxy-2-naphthoate (DHNA), a reaction involved in phylloquinone (vitamin K1) biosynthesis. This is 1,4-dihydroxy-2-naphthoyl-CoA hydrolase from Prochlorococcus marinus (strain NATL2A).